Here is a 200-residue protein sequence, read N- to C-terminus: Ubiquinol-cytochrome-c reductase complex assembly factor 1 (200 aa).

Belongs to the CBP3 family.

It is found in the mitochondrion inner membrane. Required for the assembly of the ubiquinol-cytochrome c reductase complex (mitochondrial respiratory chain complex III or cytochrome b-c1 complex). May be involved in cytochrome b translation and/or stability. The protein is Ubiquinol-cytochrome-c reductase complex assembly factor 1 (uqcc1) of Xenopus laevis (African clawed frog).